The following is a 953-amino-acid chain: GATA zinc finger domain-containing protein 14 (953 aa).

Residues 1-21 (MFEKIPNQNSHSMGDNNTGYY) show a composition bias toward polar residues. Disordered stretches follow at residues 1–109 (MFEK…SPNR) and 216–756 (TYGS…TQPQ). Low complexity predominate over residues 22–89 (NNNNNNNNNN…QLPSPQLSQP (68 aa)). The span at 90–109 (NSMNTTPNQTSPNLRSSPNR) shows a compositional bias: polar residues. Low complexity-rich tracts occupy residues 219-330 (SSNT…VNAN), 342-683 (NIYN…PNSS), and 690-756 (GNNG…TQPQ). Residues 893-918 (CTSCGTTQTPEWRKGPAGGKSLCNAC) form a GATA-type zinc finger. The interval 934-953 (KVETTSSPPSTSMNVVNLLN) is disordered.

This Dictyostelium discoideum (Social amoeba) protein is GATA zinc finger domain-containing protein 14 (gtaN).